The sequence spans 362 residues: Serine/threonine-protein kinase SRK2E (362 aa).

A phosphoserine; by autocatalysis mark is found at serine 7, serine 18, serine 29, and serine 43. The Protein kinase domain occupies 21–277 (YELVKDIGSG…IPEIRNHEWF (257 aa)). 27–35 (IGSGNFGVA) provides a ligand contact to ATP. Lysine 50 provides a ligand contact to ATP. Catalysis depends on aspartate 140, which acts as the Proton acceptor. An activation loop region spans residues 160–186 (DFGYSKSSVLHSQPKSTVGTPAYIAPE). Serine 175 is subject to Phosphoserine. Positions 283-318 (ADLMNDNTMTTQFDESDQPGQSIEEIMQIIAEATVP) are domain I; osmotic stress response, required for the kinase activity. Residues 319-362 (PAGTQNLNHYLTGSLDIDDDMEEDLESDLDDLDIDSSGEIVYAM) are domain II; ABA response and ABI1 binding.

Belongs to the protein kinase superfamily. Ser/Thr protein kinase family. Interacts with ABI1, PP2CA and SLAC1. Interacts with B'ALPHA, B'BETA, B'DELTA, PP2AA2, PP2AA3, PP2A1 and PP2A2. Associates with MAPKKK18 within the nucleus. Interacts with I-2, TOPP1 and TOPP2. Interacts with ABI2. In terms of processing, autophosphorylation on residues Ser-7, Ser-18, Ser-29, Ser-43, Ser-175 and/or Thr-176. Only the phosphorylation of Ser-175 is crucial for the kinase activity. The phosphorylation of Ser-43 may repress the ABA signaling pathway in absence of ABA. Expressed in seedlings, leaves, flowers, stems, and roots, but restricted to guard cells and vascular tissue.

The protein localises to the nucleus. It carries out the reaction L-seryl-[protein] + ATP = O-phospho-L-seryl-[protein] + ADP + H(+). The enzyme catalyses L-threonyl-[protein] + ATP = O-phospho-L-threonyl-[protein] + ADP + H(+). Kinase activity enhanced by ABA and low humidity. Repressed by PP2CA independently of its phosphatase activity. Probably inactivated by ABI1. Repressed by TOPP1. Negatively regulated by ABI2. Its function is as follows. Activator of the abscisic acid (ABA) signaling pathway that regulates numerous ABA responses, such as stomata closure in response to drought, darkness, high CO(2), plant pathogens, or decreases in atmospheric relative humidity (RH). Involved in the resistance to drought by avoiding water loss. Required for the stomata closure mediated by pathogen-associated molecular pattern (PAMPs) (e.g. flg22 and LPS) of pathogenic bacteria such as P.syringae pv. tomato (Pst) and E.coli O157:H7. As a plant defense process, stomata are closed transiently in order to limit invaders, but actively reopened by bacteria after a few hours; virulent strains (e.g. Pst DC3000) are more efficient than avirulent strains (e.g. Pst DC3000 AvrRpt2) in reopening stomata. Mediates the phosphorylation and activation of the S-type anion efflux channel SLAC1, and thus promotes stomata closure. Essential for stomatal closure in response to reactive oxygen species (ROS). Promotes MAPKKK18 activity upon abscisic acid (ABA) treatment. This Arabidopsis thaliana (Mouse-ear cress) protein is Serine/threonine-protein kinase SRK2E.